The primary structure comprises 575 residues: V-type ATP synthase alpha chain (575 aa).

Residue G238 to T245 coordinates ATP.

The protein belongs to the ATPase alpha/beta chains family.

The catalysed reaction is ATP + H2O + 4 H(+)(in) = ADP + phosphate + 5 H(+)(out). Functionally, produces ATP from ADP in the presence of a proton gradient across the membrane. The V-type alpha chain is a catalytic subunit. The sequence is that of V-type ATP synthase alpha chain from Borreliella burgdorferi (strain ZS7) (Borrelia burgdorferi).